A 166-amino-acid polypeptide reads, in one-letter code: NAD(P)H-quinone oxidoreductase subunit I, chloroplastic (166 aa).

4Fe-4S ferredoxin-type domains follow at residues 55–84 (GRIH…VDWK) and 95–124 (LNYS…MTEE). Positions 64, 67, 70, 74, 104, 107, 110, and 114 each coordinate [4Fe-4S] cluster.

Belongs to the complex I 23 kDa subunit family. NDH is composed of at least 16 different subunits, 5 of which are encoded in the nucleus. [4Fe-4S] cluster is required as a cofactor.

It localises to the plastid. It is found in the chloroplast thylakoid membrane. The enzyme catalyses a plastoquinone + NADH + (n+1) H(+)(in) = a plastoquinol + NAD(+) + n H(+)(out). The catalysed reaction is a plastoquinone + NADPH + (n+1) H(+)(in) = a plastoquinol + NADP(+) + n H(+)(out). Functionally, NDH shuttles electrons from NAD(P)H:plastoquinone, via FMN and iron-sulfur (Fe-S) centers, to quinones in the photosynthetic chain and possibly in a chloroplast respiratory chain. The immediate electron acceptor for the enzyme in this species is believed to be plastoquinone. Couples the redox reaction to proton translocation, and thus conserves the redox energy in a proton gradient. The chain is NAD(P)H-quinone oxidoreductase subunit I, chloroplastic from Chaenactis santolinoides (Santolina pincushion).